The primary structure comprises 375 residues: Isopentenyl-diphosphate delta-isomerase (375 aa).

8-9 (RK) lines the substrate pocket. FMN-binding positions include T65, 66-68 (GMT), S96, and N125. 96-98 (SQR) provides a ligand contact to substrate. Q160 is a substrate binding site. Residue E161 coordinates Mg(2+). Residues K192, T222, 273–275 (GVR), and 294–295 (AL) each bind FMN.

Belongs to the IPP isomerase type 2 family. In terms of assembly, homooctamer. Dimer of tetramers. FMN serves as cofactor. Requires NADPH as cofactor. Mg(2+) is required as a cofactor.

The protein localises to the cytoplasm. The enzyme catalyses isopentenyl diphosphate = dimethylallyl diphosphate. Involved in the biosynthesis of isoprenoids. Catalyzes the 1,3-allylic rearrangement of the homoallylic substrate isopentenyl (IPP) to its allylic isomer, dimethylallyl diphosphate (DMAPP). The sequence is that of Isopentenyl-diphosphate delta-isomerase from Aeropyrum pernix (strain ATCC 700893 / DSM 11879 / JCM 9820 / NBRC 100138 / K1).